The following is a 327-amino-acid chain: UPF0065 protein in gbd 5'region (327 aa).

Positions 1–30 form a signal peptide, tat-type signal; it reads MQRRHFIARAGIAAATAALGLAAMPAQAQA.

Belongs to the UPF0065 (bug) family. In terms of processing, predicted to be exported by the Tat system. The position of the signal peptide cleavage has not been experimentally proven.

The protein localises to the periplasm. The protein is UPF0065 protein in gbd 5'region of Cupriavidus necator (Alcaligenes eutrophus).